A 427-amino-acid chain; its full sequence is Putative dipeptidase MCYG_02918 (427 aa).

The first 29 residues, 1–29, serve as a signal peptide directing secretion; it reads MAPERRSRLSDAGILVSLLALTSLVPVQA. Zn(2+) contacts are provided by H55, D57, and E167. C106 and C196 are joined by a disulfide. H194 contacts substrate. Residues H238 and H259 each contribute to the Zn(2+) site. Substrate is bound by residues R270 and D330. N-linked (GlcNAc...) asparagine glycosylation occurs at N402.

Belongs to the metallo-dependent hydrolases superfamily. Peptidase M19 family. It depends on Zn(2+) as a cofactor.

The enzyme catalyses an L-aminoacyl-L-amino acid + H2O = 2 an L-alpha-amino acid. Its function is as follows. Hydrolyzes a wide range of dipeptides. This is Putative dipeptidase MCYG_02918 from Arthroderma otae (strain ATCC MYA-4605 / CBS 113480) (Microsporum canis).